We begin with the raw amino-acid sequence, 91 residues long: Cell division topological specificity factor (91 aa).

It belongs to the MinE family.

In terms of biological role, prevents the cell division inhibition by proteins MinC and MinD at internal division sites while permitting inhibition at polar sites. This ensures cell division at the proper site by restricting the formation of a division septum at the midpoint of the long axis of the cell. The sequence is that of Cell division topological specificity factor from Chloroflexus aurantiacus (strain ATCC 29366 / DSM 635 / J-10-fl).